The primary structure comprises 316 residues: UDP-N-acetylenolpyruvoylglucosamine reductase (316 aa).

The FAD-binding PCMH-type domain maps to V30–G194. The active site involves R173. S223 acts as the Proton donor in catalysis. E293 is an active-site residue.

Belongs to the MurB family. It depends on FAD as a cofactor.

The protein localises to the cytoplasm. The enzyme catalyses UDP-N-acetyl-alpha-D-muramate + NADP(+) = UDP-N-acetyl-3-O-(1-carboxyvinyl)-alpha-D-glucosamine + NADPH + H(+). It participates in cell wall biogenesis; peptidoglycan biosynthesis. Functionally, cell wall formation. This is UDP-N-acetylenolpyruvoylglucosamine reductase from Streptococcus pneumoniae serotype 19F (strain G54).